The primary structure comprises 326 residues: Tetraacyldisaccharide 4'-kinase (326 aa).

52 to 59 (TLGGAGKT) is a binding site for ATP.

It belongs to the LpxK family.

The catalysed reaction is a lipid A disaccharide + ATP = a lipid IVA + ADP + H(+). Its pathway is glycolipid biosynthesis; lipid IV(A) biosynthesis; lipid IV(A) from (3R)-3-hydroxytetradecanoyl-[acyl-carrier-protein] and UDP-N-acetyl-alpha-D-glucosamine: step 6/6. Transfers the gamma-phosphate of ATP to the 4'-position of a tetraacyldisaccharide 1-phosphate intermediate (termed DS-1-P) to form tetraacyldisaccharide 1,4'-bis-phosphate (lipid IVA). The sequence is that of Tetraacyldisaccharide 4'-kinase from Methylobacterium radiotolerans (strain ATCC 27329 / DSM 1819 / JCM 2831 / NBRC 15690 / NCIMB 10815 / 0-1).